The following is a 423-amino-acid chain: Putative competence-damage inducible protein (423 aa).

It belongs to the CinA family.

In Streptococcus thermophilus (strain ATCC BAA-491 / LMD-9), this protein is Putative competence-damage inducible protein.